Here is a 129-residue protein sequence, read N- to C-terminus: Virion-associated protein (129 aa).

Coiled-coil stretches lie at residues Met1 to Leu31 and Ile38 to Asp59. Residues Pro122 to Phe129 form a capsid binding region.

This sequence belongs to the caulimovirus ORF III family. As to quaternary structure, homotetramer, through coiled-coil domain. Homotrimer when bound on icosehadral capsid. Interacts with capsid protein, and with movement protein.

Its subcellular location is the virion. The protein localises to the host cell junction. The protein resides in the host plasmodesma. Functionally, plays a role in virus cell-to-cell and plant-to-plant transmission. Interacts with virion icosahedral capsid and movement protein, thereby facilitating virion cell-to-cell transmission through plasmodesmata opened by viral movement protein. Also interacts with aphid transmission factor, attaching the virion to aphid stylet when the animal feeds on an virus infected plant. Aphid saliva may later detach the virion, inducing release of infectious particles when the animal feeds on a new plant. This chain is Virion-associated protein, found in Cauliflower mosaic virus (strain Strasbourg) (CaMV).